Reading from the N-terminus, the 275-residue chain is NH(3)-dependent NAD(+) synthetase (275 aa).

Position 46 to 53 (46 to 53) interacts with ATP; that stretch reads GISGGQDS. Asp52 serves as a coordination point for Mg(2+). Position 140 (Arg140) interacts with deamido-NAD(+). ATP is bound at residue Thr160. Glu165 serves as a coordination point for Mg(2+). Positions 173 and 180 each coordinate deamido-NAD(+). ATP is bound by residues Lys189 and Thr211. 260–261 is a deamido-NAD(+) binding site; it reads HK.

It belongs to the NAD synthetase family. Homodimer.

The enzyme catalyses deamido-NAD(+) + NH4(+) + ATP = AMP + diphosphate + NAD(+) + H(+). It functions in the pathway cofactor biosynthesis; NAD(+) biosynthesis; NAD(+) from deamido-NAD(+) (ammonia route): step 1/1. Its function is as follows. Catalyzes the ATP-dependent amidation of deamido-NAD to form NAD. Uses ammonia as a nitrogen source. The chain is NH(3)-dependent NAD(+) synthetase from Salmonella dublin (strain CT_02021853).